The primary structure comprises 193 residues: Peptidyl-tRNA hydrolase (193 aa).

A tRNA-binding site is contributed by Y21. The active-site Proton acceptor is the H26. TRNA is bound by residues Y72, N74, and N120.

The protein belongs to the PTH family. In terms of assembly, monomer.

Its subcellular location is the cytoplasm. It carries out the reaction an N-acyl-L-alpha-aminoacyl-tRNA + H2O = an N-acyl-L-amino acid + a tRNA + H(+). In terms of biological role, hydrolyzes ribosome-free peptidyl-tRNAs (with 1 or more amino acids incorporated), which drop off the ribosome during protein synthesis, or as a result of ribosome stalling. Its function is as follows. Catalyzes the release of premature peptidyl moieties from peptidyl-tRNA molecules trapped in stalled 50S ribosomal subunits, and thus maintains levels of free tRNAs and 50S ribosomes. This chain is Peptidyl-tRNA hydrolase, found in Nocardia farcinica (strain IFM 10152).